The following is a 212-amino-acid chain: Thymidylate kinase (212 aa).

Residue 11–18 (GLEGAGKT) participates in ATP binding.

It belongs to the thymidylate kinase family.

It carries out the reaction dTMP + ATP = dTDP + ADP. Functionally, phosphorylation of dTMP to form dTDP in both de novo and salvage pathways of dTTP synthesis. This is Thymidylate kinase from Buchnera aphidicola subsp. Schizaphis graminum (strain Sg).